Consider the following 339-residue polypeptide: Phosphate acyltransferase (339 aa).

The protein belongs to the PlsX family. In terms of assembly, homodimer. Probably interacts with PlsY.

The protein resides in the cytoplasm. The enzyme catalyses a fatty acyl-[ACP] + phosphate = an acyl phosphate + holo-[ACP]. It functions in the pathway lipid metabolism; phospholipid metabolism. Catalyzes the reversible formation of acyl-phosphate (acyl-PO(4)) from acyl-[acyl-carrier-protein] (acyl-ACP). This enzyme utilizes acyl-ACP as fatty acyl donor, but not acyl-CoA. This is Phosphate acyltransferase from Vesicomyosocius okutanii subsp. Calyptogena okutanii (strain HA).